The sequence spans 311 residues: MATPLFESTIKSLPLLGRGKVRDIYAVDADKLLIVTSDRLSAFDVILPNPIPDKGRVLTAMANFWFAKLGHIVPNQLTGIDPESVVAADEREQVKGRALVVKRLKPLPIEAVVRGYVIGSGWKDYQDTGAICGIALPAGLKQAAKLPAPIFTPASKAEVGDHDENISFAQAQANCDAVLAEALAGTGKTGAGLAEEARQAAIALYSQAADYAAGRGIIIADTKFEFGIDAAGTLHLIDEALTPDSSRFWPADSYREGISPPSYDKQYVRDYLETLDWNKKAPGPDLPADVVERTAAKYREAYEKLTGLTLA.

Belongs to the SAICAR synthetase family.

It carries out the reaction 5-amino-1-(5-phospho-D-ribosyl)imidazole-4-carboxylate + L-aspartate + ATP = (2S)-2-[5-amino-1-(5-phospho-beta-D-ribosyl)imidazole-4-carboxamido]succinate + ADP + phosphate + 2 H(+). It participates in purine metabolism; IMP biosynthesis via de novo pathway; 5-amino-1-(5-phospho-D-ribosyl)imidazole-4-carboxamide from 5-amino-1-(5-phospho-D-ribosyl)imidazole-4-carboxylate: step 1/2. This chain is Phosphoribosylaminoimidazole-succinocarboxamide synthase, found in Azoarcus sp. (strain BH72).